The sequence spans 177 residues: Transcriptional repressor NrdR (177 aa).

A zinc finger spans residues 3–34 (CLFCQHTDTRVIDSRVSEDGATIRRRRECEAC). Residues 49-139 (PVIIKKDGGR…VYRSFQDVAD (91 aa)) enclose the ATP-cone domain.

The protein belongs to the NrdR family. Zn(2+) is required as a cofactor.

In terms of biological role, negatively regulates transcription of bacterial ribonucleotide reductase nrd genes and operons by binding to NrdR-boxes. The sequence is that of Transcriptional repressor NrdR from Xylella fastidiosa (strain M23).